A 689-amino-acid polypeptide reads, in one-letter code: Armadillo-like helical domain-containing protein 3 (689 aa).

Residues 520–538 form a helical membrane-spanning segment; the sequence is IFQLALQVVNLFNMFITYG.

Belongs to the ARMH3 family.

It is found in the golgi apparatus membrane. The protein localises to the cytoplasm. May be involved in Golgi maintenance and protein secretion. The protein is Armadillo-like helical domain-containing protein 3 of Danio rerio (Zebrafish).